Reading from the N-terminus, the 596-residue chain is Uptake hydrogenase large subunit (596 aa).

The Ni(2+) site is built by Cys75, Cys78, Cys575, and Cys578.

It belongs to the [NiFe]/[NiFeSe] hydrogenase large subunit family. Heterodimer of a large and a small subunit. Ni(2+) serves as cofactor.

The protein resides in the cell membrane. It carries out the reaction H2 + A = AH2. In terms of biological role, this enzyme recycles the H(2) produced by nitrogenase to increase the production of ATP and to protect nitrogenase against inhibition or damage by O(2) under carbon- or phosphate-limited conditions. The sequence is that of Uptake hydrogenase large subunit (hupB) from Bradyrhizobium diazoefficiens (strain JCM 10833 / BCRC 13528 / IAM 13628 / NBRC 14792 / USDA 110).